The chain runs to 242 residues: Octanoyltransferase (242 aa).

The 176-residue stretch at 31-206 (SQTTDEIWFL…LFLKNFGYNQ (176 aa)) folds into the BPL/LPL catalytic domain. Residues 70-77 (RGGQVTYH), 137-139 (SIG), and 150-152 (GLA) contribute to the substrate site. Catalysis depends on Cys-168, which acts as the Acyl-thioester intermediate.

Belongs to the LipB family.

It localises to the cytoplasm. It carries out the reaction octanoyl-[ACP] + L-lysyl-[protein] = N(6)-octanoyl-L-lysyl-[protein] + holo-[ACP] + H(+). It functions in the pathway protein modification; protein lipoylation via endogenous pathway; protein N(6)-(lipoyl)lysine from octanoyl-[acyl-carrier-protein]: step 1/2. Functionally, catalyzes the transfer of endogenously produced octanoic acid from octanoyl-acyl-carrier-protein onto the lipoyl domains of lipoate-dependent enzymes. Lipoyl-ACP can also act as a substrate although octanoyl-ACP is likely to be the physiological substrate. This chain is Octanoyltransferase, found in Coxiella burnetii (strain RSA 493 / Nine Mile phase I).